We begin with the raw amino-acid sequence, 242 residues long: MTTVSMRDMLQAGVHFGHQTRYWNPKMKPFIFGARNGVHIINLEHTVPMFNEALAFISNIASKKGKVLFVGTKRAASEAIKEAAVSCDQFYVDHRWLGGMLTNWKTVRQSIKRLKDLESQSIDGTFDKLTKKEALMRTRELEKLEKSLGGIKNMAGLPDVIFVIGADHEHIAIKEANNLGIPVVAVVDTNSSPDGINYIIPGNDDAMRSIRLYTESVATAAKAGRNQDLAVQAEQDGFVEAE.

It belongs to the universal ribosomal protein uS2 family.

The chain is Small ribosomal subunit protein uS2 from Shewanella piezotolerans (strain WP3 / JCM 13877).